We begin with the raw amino-acid sequence, 254 residues long: Ditrans,polycis-undecaprenyl-diphosphate synthase ((2E,6E)-farnesyl-diphosphate specific) (254 aa).

Residue D25 is part of the active site. Mg(2+) is bound at residue D25. Residues 26–29 (GNGR), W30, R38, H42, and 70–72 (SSE) each bind substrate. The active-site Proton acceptor is N73. Residues W74, R76, and R193 each contribute to the substrate site. Residue H198 coordinates Mg(2+). Residue 199–201 (RIS) participates in substrate binding. Position 212 (E212) interacts with Mg(2+).

Belongs to the UPP synthase family. In terms of assembly, homodimer. Mg(2+) is required as a cofactor.

The enzyme catalyses 8 isopentenyl diphosphate + (2E,6E)-farnesyl diphosphate = di-trans,octa-cis-undecaprenyl diphosphate + 8 diphosphate. In terms of biological role, catalyzes the sequential condensation of isopentenyl diphosphate (IPP) with (2E,6E)-farnesyl diphosphate (E,E-FPP) to yield (2Z,6Z,10Z,14Z,18Z,22Z,26Z,30Z,34E,38E)-undecaprenyl diphosphate (di-trans,octa-cis-UPP). UPP is the precursor of glycosyl carrier lipid in the biosynthesis of bacterial cell wall polysaccharide components such as peptidoglycan and lipopolysaccharide. The protein is Ditrans,polycis-undecaprenyl-diphosphate synthase ((2E,6E)-farnesyl-diphosphate specific) of Photorhabdus laumondii subsp. laumondii (strain DSM 15139 / CIP 105565 / TT01) (Photorhabdus luminescens subsp. laumondii).